The following is a 611-amino-acid chain: Leucine aminopeptidase (611 aa).

Substrate is bound by residues 129 to 131 (QCQ) and 278 to 282 (GGMEN). His-305 contributes to the Zn(2+) binding site. Glu-306 (proton acceptor) is an active-site residue. Zn(2+)-binding residues include His-309 and Glu-328. Tyr-393 functions as the Proton donor in the catalytic mechanism. Residue 562–564 (RMK) participates in substrate binding.

It belongs to the peptidase M1 family. Zn(2+) serves as cofactor.

It is found in the cytoplasm. It carries out the reaction an epoxide + H2O = an ethanediol. In terms of biological role, aminopeptidase that preferentially cleaves di- and tripeptides. Also has low epoxide hydrolase activity (in vitro). Can hydrolyze the epoxide leukotriene LTA(4) but it forms preferentially 5,6-dihydroxy-7,9,11,14-eicosatetraenoic acid rather than the cytokine leukotriene B(4) as the product compared to the homologous mammalian enzyme (in vitro). This Oryza sativa subsp. japonica (Rice) protein is Leucine aminopeptidase (LKHA4).